The primary structure comprises 134 residues: MLTWKLLGLLVLCLCAGGISGNGDPSPGSTDTHEEEDSPPLPLGPPIPGDPWPGAPPLFDEPPPPGSNRPWRDLPDSGAWPPKPPSTDPPKPPLPDDPWPAGTQPPENPWPPAPEMDHESQEEPDLDPPQEEYR.

Positions 1–21 (MLTWKLLGLLVLCLCAGGISG) are cleaved as a signal peptide. The interval 18 to 134 (GISGNGDPSP…DLDPPQEEYR (117 aa)) is disordered. Pro residues-rich tracts occupy residues 39 to 67 (PPLP…PPGS) and 81 to 98 (PPKP…PDDP). The span at 122-134 (EEPDLDPPQEEYR) shows a compositional bias: acidic residues.

The protein localises to the secreted. The protein is Psoriasis susceptibility 1 candidate gene 2 protein homolog (Psors1c2) of Mus musculus (Mouse).